The chain runs to 485 residues: Aspartyl/glutamyl-tRNA(Asn/Gln) amidotransferase subunit B (485 aa).

It belongs to the GatB/GatE family. GatB subfamily. As to quaternary structure, heterotrimer of A, B and C subunits.

It carries out the reaction L-glutamyl-tRNA(Gln) + L-glutamine + ATP + H2O = L-glutaminyl-tRNA(Gln) + L-glutamate + ADP + phosphate + H(+). The catalysed reaction is L-aspartyl-tRNA(Asn) + L-glutamine + ATP + H2O = L-asparaginyl-tRNA(Asn) + L-glutamate + ADP + phosphate + 2 H(+). Allows the formation of correctly charged Asn-tRNA(Asn) or Gln-tRNA(Gln) through the transamidation of misacylated Asp-tRNA(Asn) or Glu-tRNA(Gln) in organisms which lack either or both of asparaginyl-tRNA or glutaminyl-tRNA synthetases. The reaction takes place in the presence of glutamine and ATP through an activated phospho-Asp-tRNA(Asn) or phospho-Glu-tRNA(Gln). The polypeptide is Aspartyl/glutamyl-tRNA(Asn/Gln) amidotransferase subunit B (Rhodospirillum rubrum (strain ATCC 11170 / ATH 1.1.1 / DSM 467 / LMG 4362 / NCIMB 8255 / S1)).